The chain runs to 253 residues: 3-deoxy-manno-octulosonate cytidylyltransferase (253 aa).

The protein belongs to the KdsB family.

The protein localises to the cytoplasm. The enzyme catalyses 3-deoxy-alpha-D-manno-oct-2-ulosonate + CTP = CMP-3-deoxy-beta-D-manno-octulosonate + diphosphate. It functions in the pathway nucleotide-sugar biosynthesis; CMP-3-deoxy-D-manno-octulosonate biosynthesis; CMP-3-deoxy-D-manno-octulosonate from 3-deoxy-D-manno-octulosonate and CTP: step 1/1. The protein operates within bacterial outer membrane biogenesis; lipopolysaccharide biosynthesis. Activates KDO (a required 8-carbon sugar) for incorporation into bacterial lipopolysaccharide in Gram-negative bacteria. This Haemophilus ducreyi (strain 35000HP / ATCC 700724) protein is 3-deoxy-manno-octulosonate cytidylyltransferase.